The chain runs to 318 residues: Transaldolase (318 aa).

The Schiff-base intermediate with substrate role is filled by Lys-132.

It belongs to the transaldolase family. Type 1 subfamily. As to quaternary structure, homodimer.

The protein localises to the cytoplasm. The catalysed reaction is D-sedoheptulose 7-phosphate + D-glyceraldehyde 3-phosphate = D-erythrose 4-phosphate + beta-D-fructose 6-phosphate. The protein operates within carbohydrate degradation; pentose phosphate pathway; D-glyceraldehyde 3-phosphate and beta-D-fructose 6-phosphate from D-ribose 5-phosphate and D-xylulose 5-phosphate (non-oxidative stage): step 2/3. Transaldolase is important for the balance of metabolites in the pentose-phosphate pathway. The sequence is that of Transaldolase from Shewanella oneidensis (strain ATCC 700550 / JCM 31522 / CIP 106686 / LMG 19005 / NCIMB 14063 / MR-1).